Reading from the N-terminus, the 306-residue chain is Tyrosine recombinase XerC (306 aa).

The Core-binding (CB) domain maps to 2 to 81 (AKASAAIEEF…ALRQFYGFLV (80 aa)). The Tyr recombinase domain occupies 102–283 (PLPKTLSHKE…DAARLVALVN (182 aa)). Residues arginine 146, lysine 170, histidine 235, arginine 238, and histidine 261 contribute to the active site. Tyrosine 270 (O-(3'-phospho-DNA)-tyrosine intermediate) is an active-site residue.

It belongs to the 'phage' integrase family. XerC subfamily. In terms of assembly, forms a cyclic heterotetrameric complex composed of two molecules of XerC and two molecules of XerD.

It localises to the cytoplasm. Its function is as follows. Site-specific tyrosine recombinase, which acts by catalyzing the cutting and rejoining of the recombining DNA molecules. The XerC-XerD complex is essential to convert dimers of the bacterial chromosome into monomers to permit their segregation at cell division. It also contributes to the segregational stability of plasmids. The chain is Tyrosine recombinase XerC from Erythrobacter litoralis (strain HTCC2594).